Reading from the N-terminus, the 264-residue chain is MTSVSERFRSLKQAGQCALIPFITAGDPDLETTEQALKILDAAGADFIELGVPYSDPLADGPTIQAAATRALSRGVTLEQVLAIVQRVHGQLTAPIILFTYYNPIFYRGIDAFMAQVAAAGVKGLVIPDLPLEESQMVLDAATSHGLDLILLVAPTSPTERIEAIAKASQGFIYLVSVTGVTGARTSVASRVGELLPKLRQVTDKPIGVGFGVSDPAQARQLKEWGADGVIVGSAVVKRLATGTPAEGLAAVKEFCESLKEAIA.

Active-site proton acceptor residues include glutamate 49 and aspartate 60.

Belongs to the TrpA family. In terms of assembly, tetramer of two alpha and two beta chains.

It carries out the reaction (1S,2R)-1-C-(indol-3-yl)glycerol 3-phosphate + L-serine = D-glyceraldehyde 3-phosphate + L-tryptophan + H2O. It participates in amino-acid biosynthesis; L-tryptophan biosynthesis; L-tryptophan from chorismate: step 5/5. In terms of biological role, the alpha subunit is responsible for the aldol cleavage of indoleglycerol phosphate to indole and glyceraldehyde 3-phosphate. The chain is Tryptophan synthase alpha chain from Picosynechococcus sp. (strain ATCC 27264 / PCC 7002 / PR-6) (Agmenellum quadruplicatum).